Here is a 664-residue protein sequence, read N- to C-terminus: uncharacterized protein (664 aa).

A signal peptide spans methionine 1–asparagine 35. N-linked (GlcNAc...) asparagine glycans are attached at residues asparagine 101 and asparagine 138. Sel1-like repeat units follow at residues alanine 141–serine 178 and leucine 179–phenylalanine 214. N-linked (GlcNAc...) asparagine glycans are attached at residues asparagine 221, asparagine 300, and asparagine 371. Sel1-like repeat units lie at residues alanine 337–aspartate 372, serine 373–asparagine 409, proline 410–serine 441, and valine 442–arginine 477. Residues asparagine 454 and asparagine 537 are each glycosylated (N-linked (GlcNAc...) asparagine). Sel1-like repeat units follow at residues isoleucine 564–serine 599 and glycine 601–asparagine 636.

This sequence belongs to the sel-1 family.

This is an uncharacterized protein from Schizosaccharomyces pombe (strain 972 / ATCC 24843) (Fission yeast).